Here is a 429-residue protein sequence, read N- to C-terminus: Histidinol dehydrogenase (429 aa).

NAD(+) contacts are provided by Tyr131, Gln193, and Asn216. Substrate contacts are provided by Ser239, Gln261, and His264. Zn(2+) is bound by residues Gln261 and His264. Active-site proton acceptor residues include Glu327 and His328. Residues His328, Asp361, Glu415, and His420 each contribute to the substrate site. Asp361 is a binding site for Zn(2+). His420 is a binding site for Zn(2+).

Belongs to the histidinol dehydrogenase family. It depends on Zn(2+) as a cofactor.

It carries out the reaction L-histidinol + 2 NAD(+) + H2O = L-histidine + 2 NADH + 3 H(+). It functions in the pathway amino-acid biosynthesis; L-histidine biosynthesis; L-histidine from 5-phospho-alpha-D-ribose 1-diphosphate: step 9/9. Functionally, catalyzes the sequential NAD-dependent oxidations of L-histidinol to L-histidinaldehyde and then to L-histidine. In Methanocaldococcus jannaschii (strain ATCC 43067 / DSM 2661 / JAL-1 / JCM 10045 / NBRC 100440) (Methanococcus jannaschii), this protein is Histidinol dehydrogenase (hisD).